The chain runs to 228 residues: Ribonuclease 3 (228 aa).

The region spanning 7-136 (LNKLKNEYNI…FNGALFLDQG (130 aa)) is the RNase III domain. E49 is a Mg(2+) binding site. D53 is an active-site residue. D122 and E125 together coordinate Mg(2+). The active site involves E125. The DRBM domain occupies 162–228 (DYKTDLQELL…AAKAALQKFE (67 aa)). Residues 207–228 (GEGHNKKAAEQQAAKAALQKFE) form a disordered region. A compositionally biased stretch (low complexity) spans 216–228 (EQQAAKAALQKFE).

This sequence belongs to the ribonuclease III family. As to quaternary structure, homodimer. Requires Mg(2+) as cofactor.

It localises to the cytoplasm. The enzyme catalyses Endonucleolytic cleavage to 5'-phosphomonoester.. Functionally, digests double-stranded RNA. Involved in the processing of primary rRNA transcript to yield the immediate precursors to the large and small rRNAs (23S and 16S). Processes some mRNAs, and tRNAs when they are encoded in the rRNA operon. Processes pre-crRNA and tracrRNA of type II CRISPR loci if present in the organism. This Lactobacillus acidophilus (strain ATCC 700396 / NCK56 / N2 / NCFM) protein is Ribonuclease 3.